A 207-amino-acid polypeptide reads, in one-letter code: Small ribosomal subunit protein uS4 (207 aa).

Over residues 29 to 38 the composition is skewed to basic and acidic residues; sequence SDKAKFDSKP. The interval 29 to 54 is disordered; it reads SDKAKFDSKPGQHGRTSGTRTSDYGL. Positions 42–52 are enriched in polar residues; sequence GRTSGTRTSDY. In terms of domain architecture, S4 RNA-binding spans 97–160; the sequence is SRLDNVVYRM…KKQTRIAEAL (64 aa).

It belongs to the universal ribosomal protein uS4 family. Part of the 30S ribosomal subunit. Contacts protein S5. The interaction surface between S4 and S5 is involved in control of translational fidelity.

Functionally, one of the primary rRNA binding proteins, it binds directly to 16S rRNA where it nucleates assembly of the body of the 30S subunit. Its function is as follows. With S5 and S12 plays an important role in translational accuracy. The polypeptide is Small ribosomal subunit protein uS4 (Polaromonas naphthalenivorans (strain CJ2)).